Consider the following 88-residue polypeptide: Acyl-CoA-binding protein homolog (88 aa).

Residues 3–88 (PQADFDKAAG…AHELIEKYGL (86 aa)) enclose the ACB domain. Residues lysine 15, 30–34 (YGLYK), lysine 52, lysine 56, and tyrosine 75 contribute to the an acyl-CoA site.

Belongs to the ACBP family. In terms of tissue distribution, brain. Is selectively expressed in glial cells.

It is found in the endoplasmic reticulum. Its subcellular location is the golgi apparatus. Functionally, may play important functions in the control of brain and pituitary activities. May regulate GABA neurotransmission through a paracrine and/or autocrine mechanism. May not bind acyl-CoA esters. This Pelophylax ridibundus (Marsh frog) protein is Acyl-CoA-binding protein homolog.